The following is a 378-amino-acid chain: Chaperone protein DnaJ (378 aa).

The J domain maps to 5–70 (DYYEVLGVAK…QKRAAYDQYG (66 aa)). The segment at 138–216 (GYDTQIRVPS…CHGSGKVKET (79 aa)) adopts a CR-type zinc-finger fold. Zn(2+)-binding residues include Cys151, Cys154, Cys168, Cys171, Cys190, Cys193, Cys204, and Cys207. 4 CXXCXGXG motif repeats span residues 151–158 (CEVCHGSG), 168–175 (CPTCHGQG), 190–197 (CPKCHGTG), and 204–211 (CAHCHGSG).

This sequence belongs to the DnaJ family. Homodimer. The cofactor is Zn(2+).

It localises to the cytoplasm. Participates actively in the response to hyperosmotic and heat shock by preventing the aggregation of stress-denatured proteins and by disaggregating proteins, also in an autonomous, DnaK-independent fashion. Unfolded proteins bind initially to DnaJ; upon interaction with the DnaJ-bound protein, DnaK hydrolyzes its bound ATP, resulting in the formation of a stable complex. GrpE releases ADP from DnaK; ATP binding to DnaK triggers the release of the substrate protein, thus completing the reaction cycle. Several rounds of ATP-dependent interactions between DnaJ, DnaK and GrpE are required for fully efficient folding. Also involved, together with DnaK and GrpE, in the DNA replication of plasmids through activation of initiation proteins. This chain is Chaperone protein DnaJ, found in Burkholderia cenocepacia (strain HI2424).